Consider the following 346-residue polypeptide: Cyclin-dependent kinase 20 (346 aa).

In terms of domain architecture, Protein kinase spans 4 to 288; that stretch reads YCILGRIGEG…ASKALLHQYF (285 aa). Residues 10–18 and lysine 33 contribute to the ATP site; that span reads IGEGAHGIV. Aspartate 127 functions as the Proton acceptor in the catalytic mechanism.

It belongs to the protein kinase superfamily. CMGC Ser/Thr protein kinase family. CDC2/CDKX subfamily. Monomer. Interacts with TBC1D32. Interacts with MAK.

It is found in the nucleus. Its subcellular location is the cytoplasm. It localises to the cell projection. The protein localises to the cilium. It catalyses the reaction L-seryl-[protein] + ATP = O-phospho-L-seryl-[protein] + ADP + H(+). It carries out the reaction L-threonyl-[protein] + ATP = O-phospho-L-threonyl-[protein] + ADP + H(+). Functionally, required for high-level Shh responses in the developing neural tube. Together with TBC1D32, controls the structure of the primary cilium by coordinating assembly of the ciliary membrane and axoneme, allowing GLI2 to be properly activated in response to SHH signaling. Involved in cell growth. Activates CDK2, a kinase involved in the control of the cell cycle, by phosphorylating residue 'Thr-160'. This is Cyclin-dependent kinase 20 (CDK20) from Homo sapiens (Human).